Consider the following 147-residue polypeptide: Protein archease (147 aa).

The Ca(2+) site is built by aspartate 17, aspartate 146, and valine 147.

This sequence belongs to the archease family.

In terms of biological role, activates the tRNA-splicing ligase complex by facilitating the enzymatic turnover of catalytic subunit RtcB. Acts by promoting the guanylylation of RtcB, a key intermediate step in tRNA ligation. Can also alter the NTP specificity of RtcB such that ATP, dGTP or ITP is used efficiently. This Pyrobaculum islandicum (strain DSM 4184 / JCM 9189 / GEO3) protein is Protein archease.